The chain runs to 427 residues: Type II methyltransferase M1.BsuMI (427 aa).

An SAM-dependent MTase C5-type domain is found at 84–427; it reads INIADLFSGC…SYLLALHQLR (344 aa). Cysteine 176 is an active-site residue.

The protein belongs to the class I-like SAM-binding methyltransferase superfamily. C5-methyltransferase family. In terms of assembly, monomer. May form a complex with YdiP, also seems to be active alone.

The catalysed reaction is a 2'-deoxycytidine in DNA + S-adenosyl-L-methionine = a 5-methyl-2'-deoxycytidine in DNA + S-adenosyl-L-homocysteine + H(+). Its activity is regulated as follows. Somewhat inhibited by MgCl(2) and spermidine, strongly inhibited by MnCl(2). In terms of biological role, a methylase, recognizes the double-stranded sequence 5'-YTCGAR-3', methylates C-3 on both strands, and protects the DNA from cleavage by the BsuMI endonuclease. This chain is Type II methyltransferase M1.BsuMI (ydiO), found in Bacillus subtilis (strain 168).